A 61-amino-acid chain; its full sequence is Large ribosomal subunit protein eL24 (61 aa).

Cys7, Cys10, Cys33, and Cys37 together coordinate Zn(2+). Residues 7-37 (CSFCGHEIPPGTGLMYVRNDGTMLWFCSSKC) form a C4-type zinc finger.

This sequence belongs to the eukaryotic ribosomal protein eL24 family. As to quaternary structure, part of the 50S ribosomal subunit. Forms a cluster with proteins L3 and L14. Zn(2+) is required as a cofactor.

Binds to the 23S rRNA. The protein is Large ribosomal subunit protein eL24 of Saccharolobus islandicus (strain M.16.27) (Sulfolobus islandicus).